Consider the following 261-residue polypeptide: CD40 ligand (261 aa).

At 1-22 (MIETYNQTSPRSAATGLPISMK) the chain is on the cytoplasmic side. The helical; Signal-anchor for type II membrane protein transmembrane segment at 23–46 (IFMYLLTVFLITQMIGSALFAVYL) threads the bilayer. Residues 47 to 261 (HRRLDKIEDE…GFTSFGLLKL (215 aa)) lie on the Extracellular side of the membrane. Positions 122–261 (IAAHVISEAS…GFTSFGLLKL (140 aa)) constitute a THD domain. An intrachain disulfide couples C178 to C218. N-linked (GlcNAc...) (complex) asparagine; alternate glycosylation is present at N240. N240 carries an N-linked (GlcNAc...) (high mannose) asparagine; alternate glycan.

It belongs to the tumor necrosis factor family. As to quaternary structure, homotrimer. Interacts with isoform 3 of CD28. CD40 ligand, soluble form: Exists as either a monomer or a homotrimer. Forms a ternary complex between CD40 and integrins for CD40-CD40LG signaling. The soluble form derives from the membrane form by proteolytic processing. Post-translationally, N-linked glycan is a mixture of high mannose and complex type. Glycan structure does not influence binding affinity to CD40. In terms of processing, not O-glycosylated. As to expression, specifically expressed on activated CD4+ T-lymphocytes.

The protein localises to the cell membrane. It localises to the cell surface. It is found in the secreted. Functionally, cytokine that acts as a ligand to CD40/TNFRSF5. Costimulates T-cell proliferation and cytokine production. Its cross-linking on T-cells generates a costimulatory signal which enhances the production of IL4 and IL10 in conjunction with the TCR/CD3 ligation and CD28 costimulation. Induces the activation of NF-kappa-B. Induces the activation of kinases MAPK8 and PAK2 in T-cells. Induces tyrosine phosphorylation of isoform 3 of CD28. Mediates B-cell proliferation in the absence of co-stimulus as well as IgE production in the presence of IL4. Involved in immunoglobulin class switching. Acts as a ligand for integrins, specifically ITGA5:ITGB1 and ITGAV:ITGB3; both integrins and the CD40 receptor are required for activation of CD40-CD40LG signaling, which have cell-type dependent effects, such as B-cell activation, NF-kappa-B signaling and anti-apoptotic signaling. This is CD40 ligand (CD40LG) from Homo sapiens (Human).